Reading from the N-terminus, the 239-residue chain is tRNA (guanine-N(1)-)-methyltransferase (239 aa).

S-adenosyl-L-methionine-binding positions include Gly-110 and 130–135 (VGDYVL).

This sequence belongs to the RNA methyltransferase TrmD family. As to quaternary structure, homodimer.

The protein resides in the cytoplasm. The catalysed reaction is guanosine(37) in tRNA + S-adenosyl-L-methionine = N(1)-methylguanosine(37) in tRNA + S-adenosyl-L-homocysteine + H(+). Its function is as follows. Specifically methylates guanosine-37 in various tRNAs. The protein is tRNA (guanine-N(1)-)-methyltransferase of Borrelia hermsii (strain HS1 / DAH).